The chain runs to 204 residues: Pectinesterase inhibitor 9 (204 aa).

A signal peptide spans 1–23 (MELKNTIFLVILLSITILQSSSA). The N-linked (GlcNAc...) asparagine glycan is linked to N26. Disulfide bonds link C38–C47 and C106–C157.

This sequence belongs to the PMEI family. Binds reversibly to PME3 to inhibit its activity; the stability of the PME3-PMEI9 complex and the inhibition of the pectin methylesterase (PME) activity is pH-dependent, based on protonation status of amino-acids at the complex interface. As to expression, highly expressed in roots and etiolated hypocotyls. Expressed in seedlings, leaves, stems, siliques, floral buds and mature seeds.

The protein localises to the secreted. The protein resides in the extracellular space. Its subcellular location is the apoplast. Functionally, pectin methylesterase (PME) inhibitor that probably targets root-expressed PME and PME3 in a moderate pH-dependent manner, mainly in slightly acidic conditions (pH 6.3 and 5.0) and to some extent at pH 7.5; this processus relies on changes in the protonation of amino acids involved in intermolecular and intramolecular interactions. Regulates de-methylesterification of pectins in roots and affects root growth. The sequence is that of Pectinesterase inhibitor 9 from Arabidopsis thaliana (Mouse-ear cress).